Reading from the N-terminus, the 311-residue chain is Interleukin-20 receptor subunit beta (311 aa).

Positions 1–29 (MQTFTMVLEEIWTSLFMWFFYALIPCLLT) are cleaved as a signal peptide. At 30 to 233 (DEVAILPAPQ…VEVQGEAIPL (204 aa)) the chain is on the extracellular side. Fibronectin type-III domains follow at residues 37-136 (APQN…RNST) and 144-228 (EITK…EVQG). Asn40 carries an N-linked (GlcNAc...) asparagine glycan. Residues Cys89 and Cys97 are joined by a disulfide bond. Residue Asn134 is glycosylated (N-linked (GlcNAc...) asparagine). Cysteines 202 and 223 form a disulfide. The chain crosses the membrane as a helical span at residues 234-254 (VLALFAFVGFMLILVVVPLFV). At 255–311 (WKMGRLLQYSCCPVVVLPDTLKITNSPQKLISCRREEVDACATAVMSPEELLRAWIS) the chain is on the cytoplasmic side.

The protein belongs to the type II cytokine receptor family. In terms of assembly, heterodimer with IL20RA and heterodimer with IL22RA1. As to expression, widely expressed with highest levels in skin and testis. Highly expressed in psoriatic skin.

The protein localises to the membrane. Its function is as follows. The IL20RA/IL20RB dimer is a receptor for IL19, IL20 and IL24. The IL22RA1/IL20RB dimer is a receptor for IL20 and IL24. The protein is Interleukin-20 receptor subunit beta (IL20RB) of Homo sapiens (Human).